We begin with the raw amino-acid sequence, 173 residues long: uncharacterized protein (173 aa).

The disordered stretch occupies residues 49 to 72 (PTRSGRTSNSGNRGPVMTSTSSIN).

This is an uncharacterized protein from Human adenovirus B serotype 7 (HAdV-7).